A 715-amino-acid chain; its full sequence is Polyribonucleotide nucleotidyltransferase (715 aa).

Residues D489 and D495 each coordinate Mg(2+). The region spanning 556–615 (PRIETLRIPTEKIREVIGTGGKVIREICEKTGAKINIEDDGTVKVASSDGNSIKAAINWI) is the KH domain. In terms of domain architecture, S1 motif spans 625-693 (GHIYDGTVVK…DRGKVRLSMR (69 aa)).

Belongs to the polyribonucleotide nucleotidyltransferase family. Requires Mg(2+) as cofactor.

The protein localises to the cytoplasm. It catalyses the reaction RNA(n+1) + phosphate = RNA(n) + a ribonucleoside 5'-diphosphate. Involved in mRNA degradation. Catalyzes the phosphorolysis of single-stranded polyribonucleotides processively in the 3'- to 5'-direction. This Beijerinckia indica subsp. indica (strain ATCC 9039 / DSM 1715 / NCIMB 8712) protein is Polyribonucleotide nucleotidyltransferase.